Consider the following 317-residue polypeptide: Probable porphobilinogen deaminase (317 aa).

At cysteine 234 the chain carries S-(dipyrrolylmethanemethyl)cysteine.

This sequence belongs to the HMBS family. The cofactor is dipyrromethane.

The enzyme catalyses 4 porphobilinogen + H2O = hydroxymethylbilane + 4 NH4(+). Its pathway is porphyrin-containing compound metabolism; protoporphyrin-IX biosynthesis; coproporphyrinogen-III from 5-aminolevulinate: step 2/4. In terms of biological role, tetrapolymerization of the monopyrrole PBG into the hydroxymethylbilane pre-uroporphyrinogen in several discrete steps. The protein is Probable porphobilinogen deaminase of Methanosarcina acetivorans (strain ATCC 35395 / DSM 2834 / JCM 12185 / C2A).